An 838-amino-acid chain; its full sequence is AP-4 complex subunit beta (838 aa).

The segment at 582 to 673 is hinge; sequence NSSKQTTSIN…NQNNNQNNNQ (92 aa). Residues 648-683 form a disordered region; the sequence is ITDGNQNNNQNNNQNNNQNNNQNNNQNNQNNNNQNN. The segment covering 652–683 has biased composition (low complexity); the sequence is NQNNNQNNNQNNNQNNNQNNNQNNQNNNNQNN. Residues 674–838 are ear; it reads NNQNNNNQNN…LSIPIPKIFN (165 aa).

It belongs to the adaptor complexes large subunit family. As to quaternary structure, may be part of the adaptor protein complex 4 (AP-4), a heterotetramer composed of two large adaptins (epsilon-type subunitand beta-type subunit), a medium adaptin (mu-type subunit) and a small adaptin (sigma-type).

It localises to the golgi apparatus. Its subcellular location is the trans-Golgi network membrane. In terms of biological role, probable component of an adaptor protein complex. Adaptor protein complexes are vesicle coat components involved both in vesicle formation and cargo selection. They control the vesicular transport of proteins in different trafficking pathways. This is AP-4 complex subunit beta (ap4b1) from Dictyostelium discoideum (Social amoeba).